Reading from the N-terminus, the 891-residue chain is Fanconi-associated nuclease 1 homolog (891 aa).

4 residues coordinate Mn(2+): Glu-712, Asp-833, Glu-852, and Val-853. The 115-residue stretch at 770–884 (GMAEEILIIS…GFNVEICKVR (115 aa)) folds into the VRR-NUC domain.

This sequence belongs to the FAN1 family. Requires Mn(2+) as cofactor. The cofactor is Mg(2+).

It localises to the nucleus. The enzyme catalyses Hydrolytically removes 5'-nucleotides successively from the 3'-hydroxy termini of 3'-hydroxy-terminated oligonucleotides.. Nuclease required for the repair of DNA interstrand cross-links (ICLs). Acts as a 5'-3' exonuclease that anchors at a cut end of DNA and cleaves DNA successively at every third nucleotide, allowing to excise an ICL from one strand through flanking incisions. May act upstream of the helicase RECQL4A and the ATPase RAD5A, which is involved in error-free post-replicative repair. Functions independently of MUS81 pathway, but in a similar pathway with RECQ4A, RAD5A and MFH1 in ICL repair. This is Fanconi-associated nuclease 1 homolog from Arabidopsis thaliana (Mouse-ear cress).